Consider the following 337-residue polypeptide: Inositol 2-dehydrogenase (337 aa).

Belongs to the Gfo/Idh/MocA family. As to quaternary structure, homotetramer.

The catalysed reaction is myo-inositol + NAD(+) = scyllo-inosose + NADH + H(+). Its function is as follows. Involved in the oxidation of myo-inositol (MI) to 2-keto-myo-inositol (2KMI or 2-inosose). This chain is Inositol 2-dehydrogenase, found in Corynebacterium glutamicum (strain R).